The chain runs to 146 residues: Large ribosomal subunit protein uL11 (146 aa).

This sequence belongs to the universal ribosomal protein uL11 family. Part of the ribosomal stalk of the 50S ribosomal subunit. Interacts with L10 and the large rRNA to form the base of the stalk. L10 forms an elongated spine to which L12 dimers bind in a sequential fashion forming a multimeric L10(L12)X complex. In terms of processing, one or more lysine residues are methylated.

Functionally, forms part of the ribosomal stalk which helps the ribosome interact with GTP-bound translation factors. The protein is Large ribosomal subunit protein uL11 of Corynebacterium jeikeium (strain K411).